A 218-amino-acid chain; its full sequence is Octanoyltransferase (218 aa).

The 176-residue stretch at 34 to 209 (ETSRDELWIV…TFSQELGYQH (176 aa)) folds into the BPL/LPL catalytic domain. Residues 73–80 (RGGQVTYH), 140–142 (SLG), and 153–155 (GLA) contribute to the substrate site. The active-site Acyl-thioester intermediate is Cys171.

Belongs to the LipB family.

The protein resides in the cytoplasm. The catalysed reaction is octanoyl-[ACP] + L-lysyl-[protein] = N(6)-octanoyl-L-lysyl-[protein] + holo-[ACP] + H(+). The protein operates within protein modification; protein lipoylation via endogenous pathway; protein N(6)-(lipoyl)lysine from octanoyl-[acyl-carrier-protein]: step 1/2. Its function is as follows. Catalyzes the transfer of endogenously produced octanoic acid from octanoyl-acyl-carrier-protein onto the lipoyl domains of lipoate-dependent enzymes. Lipoyl-ACP can also act as a substrate although octanoyl-ACP is likely to be the physiological substrate. The chain is Octanoyltransferase from Shewanella loihica (strain ATCC BAA-1088 / PV-4).